The primary structure comprises 31 residues: Cytochrome b6-f complex subunit 6 (31 aa).

The chain crosses the membrane as a helical span at residues 4-26 (ITSYFGFLLAALTITPALLISLN).

Belongs to the PetL family. As to quaternary structure, the 4 large subunits of the cytochrome b6-f complex are cytochrome b6, subunit IV (17 kDa polypeptide, PetD), cytochrome f and the Rieske protein, while the 4 small subunits are PetG, PetL, PetM and PetN. The complex functions as a dimer.

The protein localises to the plastid. The protein resides in the chloroplast thylakoid membrane. Functionally, component of the cytochrome b6-f complex, which mediates electron transfer between photosystem II (PSII) and photosystem I (PSI), cyclic electron flow around PSI, and state transitions. PetL is important for photoautotrophic growth as well as for electron transfer efficiency and stability of the cytochrome b6-f complex. The chain is Cytochrome b6-f complex subunit 6 from Dioscorea elephantipes (Elephant's foot yam).